We begin with the raw amino-acid sequence, 147 residues long: 3-dehydroquinate dehydratase (147 aa).

Catalysis depends on tyrosine 23, which acts as the Proton acceptor. 3 residues coordinate substrate: asparagine 74, histidine 80, and aspartate 87. The active-site Proton donor is histidine 100. Substrate-binding positions include 101–102 (LS) and arginine 111.

It belongs to the type-II 3-dehydroquinase family. Homododecamer.

It carries out the reaction 3-dehydroquinate = 3-dehydroshikimate + H2O. It participates in metabolic intermediate biosynthesis; chorismate biosynthesis; chorismate from D-erythrose 4-phosphate and phosphoenolpyruvate: step 3/7. In terms of biological role, catalyzes a trans-dehydration via an enolate intermediate. The polypeptide is 3-dehydroquinate dehydratase (Clostridium botulinum (strain Loch Maree / Type A3)).